We begin with the raw amino-acid sequence, 869 residues long: Sodium-dependent phosphate transporter (869 aa).

Over 1–18 the chain is Extracellular; the sequence is MEAVAELSAPSLAGAPGE. The helical transmembrane segment at 19–39 threads the bilayer; the sequence is YTWIVAVAGVTCFLTAFAIGA. Over 40–54 the chain is Cytoplasmic; it reads NDVANTFSSSVGSRA. The chain crosses the membrane as a helical span at residues 55–75; that stretch reads IPLWAAIGMSAVLETVGATLL. The Extracellular portion of the chain corresponds to 76–97; the sequence is GGAVTDSIRSKIIDFEVFRETP. Residues 98–118 traverse the membrane as a helical segment; sequence SILMTGMLCALVGAGLWLFLA. Over 119–120 the chain is Cytoplasmic; it reads NH. The helical transmembrane segment at 121–141 threads the bilayer; the sequence is LGLPVSTTHSIIGALLGFGLA. Over 142-154 the chain is Extracellular; sequence SGNVRAVKWTQVA. Residues 155–175 traverse the membrane as a helical segment; sequence FIVGSWVAAPLAASAAGATIF. The Cytoplasmic portion of the chain corresponds to 176–196; the sequence is VCMRRLILRSRQPLRRAKRFL. The chain crosses the membrane as a helical span at residues 197-217; it reads WIFIYLITLTFSVFLVFKNFF. Topologically, residues 218-250 are extracellular; sequence ELNVSCDQMVAGGRVEHFEPCRISRWADAHSGT. The chain crosses the membrane as a helical span at residues 251–271; it reads ALGIAVALSVALTFVISCLVY. At 272–720 the chain is on the cytoplasmic side; sequence RFAFYRVESY…SGSADSEIGS (449 aa). 3 disordered regions span residues 286 to 312, 374 to 401, and 453 to 571; these read KRSS…GGLL, AAAA…GSSV, and SAFL…KRER. Low complexity predominate over residues 457–481; that stretch reads SSPSSSVPPSSPSPSSTPSSPSASP. Over residues 482-491 the composition is skewed to pro residues; the sequence is RRPPSRPPVP. The segment covering 492-509 has biased composition (low complexity); the sequence is RTCSPAPVSPSVPRAFAS. Residues 556-571 are compositionally biased toward basic and acidic residues; that stretch reads PHPERRDEVPAAKRER. Residues 721–741 form a helical membrane-spanning segment; sequence PWYILLFGGLSMSLGLALLGY. Topologically, residues 742–759 are extracellular; that stretch reads RVIKTVGVKLVKITPARG. Residues 760–780 form a helical membrane-spanning segment; the sequence is FSMELGAAWTVLIFSAIGIPL. The Cytoplasmic portion of the chain corresponds to 781–837; that stretch reads STTHCAVGSTVGVGLMEPKHPRRETGDGPVAEGEEPKKRAVQCPVINTASVNWKLFG. The helical transmembrane segment at 838-858 threads the bilayer; the sequence is GVFVSWIITIAFSALVTAALF. At 859-869 the chain is on the extracellular side; the sequence is SFAAYSPRMVS.

This sequence belongs to the inorganic phosphate transporter (PiT) (TC 2.A.20) family.

The protein resides in the cell membrane. It localises to the vacuole membrane. Its subcellular location is the cytoplasmic vesicle membrane. It carries out the reaction 2 Na(+)(out) + phosphate(out) = 2 Na(+)(in) + phosphate(in). In terms of biological role, sodium-phosphate symporter which preferentially transports the monovalent form of phosphate with a stoichiometry of two sodium ions per phosphate ion. Plays a role in stabilizing the cytosolic pH and osmoregulation. May be required for optimal virulence of parasites in vivo. This chain is Sodium-dependent phosphate transporter, found in Toxoplasma gondii (strain ATCC 50861 / VEG).